Here is a 321-residue protein sequence, read N- to C-terminus: Cytochrome c biogenesis protein CcsA (321 aa).

8 helical membrane passes run Ile17–Leu37, Gly44–Gly64, Leu71–Phe91, Leu98–Leu118, Met143–Ile163, Val225–Asn245, Glu258–Arg275, and Ala286–Leu306.

It belongs to the CcmF/CycK/Ccl1/NrfE/CcsA family. May interact with Ccs1.

Its subcellular location is the plastid. The protein localises to the chloroplast thylakoid membrane. Its function is as follows. Required during biogenesis of c-type cytochromes (cytochrome c6 and cytochrome f) at the step of heme attachment. This Buxus microphylla (Littleleaf boxwood) protein is Cytochrome c biogenesis protein CcsA.